Consider the following 120-residue polypeptide: Fumarate reductase subunit D (120 aa).

Transmembrane regions (helical) follow at residues 25-45 (FAMLTPVTILVLGILVPLGVI), 55-75 (VAGFVTSIIGALFVIGSISMP), and 100-120 (IACYAAAALATVLSVVFIFMI).

Belongs to the FrdD family. As to quaternary structure, part of an enzyme complex containing four subunits: a flavoprotein (FrdA), an iron-sulfur protein (FrdB), and two hydrophobic anchor proteins (FrdC and FrdD).

It localises to the cell inner membrane. Functionally, anchors the catalytic components of the fumarate reductase complex to the cell membrane, binds quinones. The polypeptide is Fumarate reductase subunit D (Aliivibrio fischeri (strain MJ11) (Vibrio fischeri)).